The sequence spans 158 residues: Serine-protein kinase RsbW (158 aa).

The protein belongs to the anti-sigma-factor family.

It catalyses the reaction L-seryl-[protein] + ATP = O-phospho-L-seryl-[protein] + ADP + H(+). It carries out the reaction L-threonyl-[protein] + ATP = O-phospho-L-threonyl-[protein] + ADP + H(+). In terms of biological role, negative regulator of sigma-B activity. Phosphorylates and inactivates its specific antagonist protein, RsbV. Upon phosphorylation of RsbV, RsbW is released and binds to sigma-B, thereby blocking its ability to form an RNA polymerase holoenzyme (E-sigma-B). This Oceanobacillus iheyensis (strain DSM 14371 / CIP 107618 / JCM 11309 / KCTC 3954 / HTE831) protein is Serine-protein kinase RsbW.